A 223-amino-acid chain; its full sequence is uncharacterized protein (223 aa).

A C4-type zinc finger spans residues 33-67; the sequence is CPICGGKGTLKAIQFIHRIPYFGEVMESTVVCERC.

This sequence belongs to the ZPR1 family.

This is an uncharacterized protein from Pyrococcus horikoshii (strain ATCC 700860 / DSM 12428 / JCM 9974 / NBRC 100139 / OT-3).